We begin with the raw amino-acid sequence, 146 residues long: Hut operon positive regulatory protein (146 aa).

It belongs to the HutP family. Homohexamer.

In terms of biological role, antiterminator that binds to cis-acting regulatory sequences on the mRNA in the presence of histidine, thereby suppressing transcription termination and activating the hut operon for histidine utilization. The protein is Hut operon positive regulatory protein of Bacillus cereus (strain AH820).